The following is a 633-amino-acid chain: Probable alkaline/neutral invertase A, chloroplastic (633 aa).

A chloroplast-targeting transit peptide spans 1–71; it reads MNAITFLGNS…TNAVPFCTDR (71 aa). Phosphoserine is present on Ser623.

It belongs to the glycosyl hydrolase 100 family. As to expression, expressed in flowers.

The protein localises to the plastid. Its subcellular location is the chloroplast. The catalysed reaction is Hydrolysis of terminal non-reducing beta-D-fructofuranoside residues in beta-D-fructofuranosides.. Chloroplastic invertase that cleaves sucrose into glucose and fructose and may participate in the carbon flux between the cytosol and plastids in leaves. The chain is Probable alkaline/neutral invertase A, chloroplastic from Arabidopsis thaliana (Mouse-ear cress).